The sequence spans 397 residues: Acetyl-CoA acetyltransferase, cytosolic (397 aa).

Met-1 is subject to N-acetylmethionine. Residue Cys-92 is the Acyl-thioester intermediate of the active site. The residue at position 200 (Lys-200) is an N6-acetyllysine. Residues Arg-223 and Ser-226 each contribute to the CoA site. An N6-acetyllysine mark is found at Lys-233 and Lys-235. Residue Ser-252 coordinates CoA. The active-site Proton donor/acceptor is Cys-383.

It belongs to the thiolase-like superfamily. Thiolase family. In terms of assembly, homotetramer.

The protein localises to the cytoplasm. The protein resides in the cytosol. It carries out the reaction 2 acetyl-CoA = acetoacetyl-CoA + CoA. The protein operates within lipid metabolism; fatty acid metabolism. In terms of biological role, involved in the biosynthetic pathway of cholesterol. The protein is Acetyl-CoA acetyltransferase, cytosolic (ACAT2) of Homo sapiens (Human).